Here is a 364-residue protein sequence, read N- to C-terminus: DNA replication and repair protein RecF (364 aa).

30–37 (GANGSGKT) is an ATP binding site.

It belongs to the RecF family.

It is found in the cytoplasm. The RecF protein is involved in DNA metabolism; it is required for DNA replication and normal SOS inducibility. RecF binds preferentially to single-stranded, linear DNA. It also seems to bind ATP. This Sodalis glossinidius protein is DNA replication and repair protein RecF.